A 373-amino-acid chain; its full sequence is Queuine tRNA-ribosyltransferase (373 aa).

Residue Asp-93 is the Proton acceptor of the active site. Substrate contacts are provided by residues 93 to 97 (DSGGF), Asp-147, Gln-189, and Gly-216. The RNA binding stretch occupies residues 247-253 (GVGAPED). Asp-266 serves as the catalytic Nucleophile. The tract at residues 271 to 275 (TRIAR) is RNA binding; important for wobble base 34 recognition. Positions 304, 306, 309, and 335 each coordinate Zn(2+).

It belongs to the queuine tRNA-ribosyltransferase family. Homodimer. Within each dimer, one monomer is responsible for RNA recognition and catalysis, while the other monomer binds to the replacement base PreQ1. Requires Zn(2+) as cofactor.

It catalyses the reaction 7-aminomethyl-7-carbaguanine + guanosine(34) in tRNA = 7-aminomethyl-7-carbaguanosine(34) in tRNA + guanine. It functions in the pathway tRNA modification; tRNA-queuosine biosynthesis. Functionally, catalyzes the base-exchange of a guanine (G) residue with the queuine precursor 7-aminomethyl-7-deazaguanine (PreQ1) at position 34 (anticodon wobble position) in tRNAs with GU(N) anticodons (tRNA-Asp, -Asn, -His and -Tyr). Catalysis occurs through a double-displacement mechanism. The nucleophile active site attacks the C1' of nucleotide 34 to detach the guanine base from the RNA, forming a covalent enzyme-RNA intermediate. The proton acceptor active site deprotonates the incoming PreQ1, allowing a nucleophilic attack on the C1' of the ribose to form the product. After dissociation, two additional enzymatic reactions on the tRNA convert PreQ1 to queuine (Q), resulting in the hypermodified nucleoside queuosine (7-(((4,5-cis-dihydroxy-2-cyclopenten-1-yl)amino)methyl)-7-deazaguanosine). This chain is Queuine tRNA-ribosyltransferase, found in Halothermothrix orenii (strain H 168 / OCM 544 / DSM 9562).